A 168-amino-acid chain; its full sequence is Peptide deformylase (168 aa).

Positions 92 and 134 each coordinate Fe cation. The active site involves Glu-135. A Fe cation-binding site is contributed by His-138.

It belongs to the polypeptide deformylase family. Fe(2+) serves as cofactor.

It catalyses the reaction N-terminal N-formyl-L-methionyl-[peptide] + H2O = N-terminal L-methionyl-[peptide] + formate. Removes the formyl group from the N-terminal Met of newly synthesized proteins. Requires at least a dipeptide for an efficient rate of reaction. N-terminal L-methionine is a prerequisite for activity but the enzyme has broad specificity at other positions. This Teredinibacter turnerae (strain ATCC 39867 / T7901) protein is Peptide deformylase.